Consider the following 130-residue polypeptide: Transcription antitermination protein NusB (130 aa).

The protein belongs to the NusB family.

Its function is as follows. Involved in transcription antitermination. Required for transcription of ribosomal RNA (rRNA) genes. Binds specifically to the boxA antiterminator sequence of the ribosomal RNA (rrn) operons. The chain is Transcription antitermination protein NusB from Macrococcus caseolyticus (strain JCSC5402) (Macrococcoides caseolyticum).